We begin with the raw amino-acid sequence, 87 residues long: Phospholemman (87 aa).

The signal sequence occupies residues 1-20 (MASLSHILVLWVGILTVVNA). The Extracellular segment spans residues 21–35 (EAPQEHDPFTYDYQS). A helical membrane pass occupies residues 36 to 56 (LRIGGLIIAGILFILGILIVL). Over 57-87 (SRRCRCKFNQQQSLGKMRSPHLAAQFSSESC) the chain is Cytoplasmic. The S-palmitoyl cysteine moiety is linked to residue C60. Residue C62 is modified to S-glutathionyl cysteine; alternate. A lipid anchor (S-palmitoyl cysteine; alternate) is attached at C62. S75 carries the post-translational modification Phosphoserine; by PKA and PKC. The residue at position 83 (S83) is a Phosphoserine; by PKA.

It belongs to the FXYD family. As to quaternary structure, homotetramer. Monomer. Regulatory subunit of the sodium/potassium-transporting ATPase (NKA) which is composed of a catalytic alpha subunit, a non-catalytic beta subunit and an additional regulatory subunit. The monomeric form associates with NKA while the oligomeric form does not. Interacts with the catalytic alpha-1 subunit ATP1A1. Also interacts with the catalytic alpha-2 and alpha-3 subunits ATP1A2 and ATP1A3. Very little interaction with ATP1A1, ATP1A2 or ATP1A3 when phosphorylated at Ser-83. Interacts with the non-catalytic beta-1 subunit ATP1B1. Oxidative stress decreases interaction with ATP1A1 but increases interaction with ATP1B1. Post-translationally, major plasma membrane substrate for cAMP-dependent protein kinase (PKA) and protein kinase C (PKC) in several different tissues. Phosphorylated in response to insulin and adrenergic stimulation. Phosphorylation at Ser-83 stimulates sodium/potassium-transporting ATPase activity while the unphosphorylated form inhibits sodium/potassium-transporting ATPase activity. Phosphorylation increases tetramerization, decreases binding to ATP1A1 and reduces inhibition of ATP1A1 activity. Phosphorylation at Ser-75 leads to greatly reduced interaction with ATP1A1, ATP1A2 and ATP1A3. May be phosphorylated by DMPK. Palmitoylation increases half-life and stability and is enhanced upon phosphorylation at Ser-83 by PKA.

Its subcellular location is the cell membrane. It is found in the sarcolemma. The protein resides in the apical cell membrane. The protein localises to the membrane. It localises to the caveola. Its subcellular location is the T-tubule. Its function is as follows. Associates with and regulates the activity of the sodium/potassium-transporting ATPase (NKA) which transports Na(+) out of the cell and K(+) into the cell. Inhibits NKA activity in its unphosphorylated state and stimulates activity when phosphorylated. Reduces glutathionylation of the NKA beta-1 subunit ATP1B1, thus reversing glutathionylation-mediated inhibition of ATP1B1. Contributes to female sexual development by maintaining the excitability of neurons which secrete gonadotropin-releasing hormone. In Sus scrofa (Pig), this protein is Phospholemman.